We begin with the raw amino-acid sequence, 346 residues long: Probable long-chain-alcohol O-fatty-acyltransferase 6 (346 aa).

8 consecutive transmembrane segments (helical) span residues 7–27 (LFIQVWVSAIISVTYCYYLTP), 36–56 (LLSVLPVCVLFLIIPIFFSTV), 59–79 (SFTIAFFLSGLAVPKLILFAL), 116–136 (FPKWVFALKVFIFGALLLQAY), 146–166 (FLLGLYALHIYLELEISLTLI), 228–248 (FFAIFATFLVSGVAHEILYFY), 255–275 (TWEVTWFFVLHGFCMAAEVAL), and 289–309 (PAVSRLLTVGFVFVTGVWLFS).

Belongs to the wax synthase family.

It is found in the membrane. The enzyme catalyses a long chain fatty alcohol + a fatty acyl-CoA = a wax ester + CoA. Catalyzes the final step in the synthesis of long-chain linear esters (waxes). This Arabidopsis thaliana (Mouse-ear cress) protein is Probable long-chain-alcohol O-fatty-acyltransferase 6 (AT6).